The following is a 451-amino-acid chain: Scaffold protein ILK (451 aa).

At Met1 the chain carries N-acetylmethionine. ANK repeat units follow at residues 2–30 (DDIF…LNQG), 31–63 (DDHG…INVM), 64–96 (NRGD…INAV), 97–129 (NEHG…VSIC), and 130–174 (NKYG…GTTR). Positions 33–139 (HGFSPLHWAC…NKYGEMPMDK (107 aa)) are interaction with LIMS1. Thr173 carries the phosphothreonine modification. The tract at residues 180-212 (GTLNKHSGIDFKQLNFLAKLNENHSGELWKGRW) is PH-like; mediates interaction with TGFB1I1. The residue at position 186 (Ser186) is a Phosphoserine. The Protein kinase domain occupies 193 to 445 (LNFLAKLNEN…PKFDMIVPIL (253 aa)). 4 residues coordinate ATP: Asn200, Asn202, His203, and Ser204. Ser246 carries the phosphoserine modification. 3 residues coordinate ATP: His270, Met272, and Asn279. Residue Asp339 participates in Mg(2+) binding. Lys341 is a binding site for ATP. The short motif at 363–371 (KKPEDTNRR) is the Nuclear localization signal element. An N6-acetyllysine modification is found at Lys425.

This sequence belongs to the protein kinase superfamily. TKL Ser/Thr protein kinase family. As to quaternary structure, component of the heterotrimeric IPP (ILK-PINCH-PARVIN) complex composed of ILK, LIMS1/PINCH and PARVA; the complex binds to F-actin via the C-terminal tail of LIMS1 and the N-terminal region of PARVA, promoting F-actin filament bundling. Formation of the IPP complex is dependent on protein kinase C and precedes integrin-mediated cell adhesion and spreading. ILK also interacts with LIMS2/PINCH2 and with PARVB and PARVG which may substitute for LIMS1 and PARVA in the IPP complex; PARVA and PARVB compete for the same binding site. Interaction with PARVG promotes the establishment of cell polarity required for leukocyte migration. Interacts with the cytoplasmic domain of integrin ITGB1 and may also interact with integrins ITGB2, ITGB3 and/or ITGB5. Interacts probably also with TGFB1I1. Interacts (via ANK repeats) with EPHA1 (via SAM domain); stimulated by EFNA1 but independent of the kinase activity of EPHA1. Interacts with FERMT2. Interacts with LIMD2; leading to activate the protein kinase activity. Interacts with PXN/PAXILLIN (via LD motif 4). Interacts with CCDC25 (via cytoplasmic region); initiating the ILK-PARVB cascade to induce cytoskeleton rearrangement and directional migration of cells. Interacts with IQGAP1; the interaction is required for localization of IQGAP1 to the cell cortex. Phosphorylation by PAK1 modulates ILK subcellular location by promoting its nuclear export.

The protein resides in the cell junction. It localises to the focal adhesion. The protein localises to the cell membrane. Its subcellular location is the cell projection. It is found in the lamellipodium. The protein resides in the cytoplasm. It localises to the myofibril. The protein localises to the sarcomere. Its subcellular location is the nucleus. It is found in the cytoskeleton. The protein resides in the microtubule organizing center. It localises to the centrosome. The protein localises to the cell cortex. Its function is as follows. Scaffold protein which mediates protein-protein interactions during a range of cellular events including focal adhesion assembly, cell adhesion and cell migration. Regulates integrin-mediated signal transduction by contributing to inside-out integrin activation. Recruits PARVA and LIMS1/PITCH to form the heterotrimeric IPP (ILK-PINCH-PARVIN) complex which binds to F-actin via the C-terminal tail of LIMS1 and the N-terminal region of PARVA, promoting F-actin filament bundling, a process required to generate force for actin cytoskeleton reorganization and subsequent dynamic cell adhesion events such as cell spreading and migration. Binding to PARVA promotes effective assembly of ILK into focal adhesions while PARVA-bound ILK can simultaneously engage integrin-beta cytoplasmic tails to mediate cell adhesion. Plays a role with PARVG in promoting the cell adhesion and spreading of leukocytes. Acts as an upstream effector of both AKT1/PKB and GSK3. Mediates trafficking of caveolae to the cell surface in an ITGB1-dependent manner by promoting the recruitment of IQGAP1 to the cell cortex which cooperates with its effector DIAPH1 to locally stabilize microtubules and allow stable insertion of caveolae into the plasma membrane. Required for the maintenance of mitotic spindle integrity by promoting phosphorylation of TACC3 by AURKA. Associates with chromatin and may act as a negative regulator of transcription when located in the nucleus. This chain is Scaffold protein ILK, found in Cavia porcellus (Guinea pig).